A 962-amino-acid polypeptide reads, in one-letter code: Putative primase C962R (962 aa).

The 169-residue stretch at 607-775 folds into the SF3 helicase domain; the sequence is ELDARLWIMF…PDPGNPYEKK (169 aa). Residue 636–643 coordinates ATP; sequence GGGCNGKT.

The protein belongs to the asfivirus helicase C962R family.

The polypeptide is Putative primase C962R (African swine fever virus (strain Badajoz 1971 Vero-adapted) (Ba71V)).